The following is a 250-amino-acid chain: Ubiquinone/menaquinone biosynthesis C-methyltransferase UbiE (250 aa).

Residues T74, D94, 122 to 123 (DA), and S139 each bind S-adenosyl-L-methionine.

Belongs to the class I-like SAM-binding methyltransferase superfamily. MenG/UbiE family.

It carries out the reaction a 2-demethylmenaquinol + S-adenosyl-L-methionine = a menaquinol + S-adenosyl-L-homocysteine + H(+). The enzyme catalyses a 2-methoxy-6-(all-trans-polyprenyl)benzene-1,4-diol + S-adenosyl-L-methionine = a 5-methoxy-2-methyl-3-(all-trans-polyprenyl)benzene-1,4-diol + S-adenosyl-L-homocysteine + H(+). It functions in the pathway quinol/quinone metabolism; menaquinone biosynthesis; menaquinol from 1,4-dihydroxy-2-naphthoate: step 2/2. Its pathway is cofactor biosynthesis; ubiquinone biosynthesis. Methyltransferase required for the conversion of demethylmenaquinol (DMKH2) to menaquinol (MKH2) and the conversion of 2-polyprenyl-6-methoxy-1,4-benzoquinol (DDMQH2) to 2-polyprenyl-3-methyl-6-methoxy-1,4-benzoquinol (DMQH2). This chain is Ubiquinone/menaquinone biosynthesis C-methyltransferase UbiE, found in Roseobacter denitrificans (strain ATCC 33942 / OCh 114) (Erythrobacter sp. (strain OCh 114)).